The sequence spans 404 residues: Keratin, type I cuticular Ha3-I (404 aa).

The head stretch occupies residues 1 to 56 (MSYSCGLPSLSCRTSCSSRPCVPPSCHGCTLPGACNIPANVSNCNWFCEGSFNGSE). The IF rod domain maps to 56-367 (EKETMQFLND…SLLESEDCKL (312 aa)). A coil 1A region spans residues 57-91 (KETMQFLNDRLASYLEKVRQLERDNAELENLIRER). The linker 1 stretch occupies residues 92 to 102 (SQQQEPLVCAS). The tract at residues 103 to 203 (YQSYFKTIEE…HEQEVNTLRC (101 aa)) is coil 1B. Residues 204 to 219 (QLGDRLNVEVDAAPTV) form a linker 12 region. The coil 2 stretch occupies residues 220 to 363 (DLNQVLNETR…NTYRSLLESE (144 aa)). Residues 364–404 (DCKLPSNPCATTNACDKSTGPCISNPCGLRARCGPCNTFGY) are tail.

This sequence belongs to the intermediate filament family. In terms of tissue distribution, expressed in the hair follicles.

In Homo sapiens (Human), this protein is Keratin, type I cuticular Ha3-I (KRT33A).